The following is a 63-amino-acid chain: Large ribosomal subunit protein uL29 (63 aa).

Belongs to the universal ribosomal protein uL29 family.

The protein is Large ribosomal subunit protein uL29 of Idiomarina loihiensis (strain ATCC BAA-735 / DSM 15497 / L2-TR).